The sequence spans 336 residues: Retinol dehydrogenase 14 (336 aa).

Thr5 bears the Phosphothreonine mark. Position 50–56 (50–56 (GANSGLG)) interacts with NADP(+). Ser192 is a substrate binding site. Tyr217 acts as the Proton acceptor in catalysis.

This sequence belongs to the short-chain dehydrogenases/reductases (SDR) family. In terms of tissue distribution, widely expressed.

The catalysed reaction is all-trans-retinol + NADP(+) = all-trans-retinal + NADPH + H(+). The enzyme catalyses 9-cis-retinol + NADP(+) = 9-cis-retinal + NADPH + H(+). It catalyses the reaction 11-cis-retinol + NADP(+) = 11-cis-retinal + NADPH + H(+). Its pathway is cofactor metabolism; retinol metabolism. In terms of biological role, retinol dehydrogenase with a clear preference for NADP. Displays high activity towards 9-cis, 11-cis and all-trans-retinol. Shows a very weak activity towards 13-cis-retinol. Has no activity towards steroid. This is Retinol dehydrogenase 14 (RDH14) from Homo sapiens (Human).